Reading from the N-terminus, the 473-residue chain is Photosystem II CP43 reaction center protein (473 aa).

A propeptide spanning residues 1–14 (MKTLYSLRRFYPVE) is cleaved from the precursor. Thr15 carries the post-translational modification N-acetylthreonine. Thr15 bears the Phosphothreonine mark. 5 helical membrane-spanning segments follow: residues 69–93 (LFEVAHFVPEKPMYEQGLILLPHLA), 134–155 (LLGPETLEESFPFFGYVWKDRN), 178–200 (KALYFGGVYDTWAPGGGDVRKIT), 255–275 (KPFAWARRAFVWSGEAYLSYS), and 291–312 (WFNNTAYPSEFYGPTGPEASQA). Glu367 is a [CaMn4O5] cluster binding site. Residues 447–471 (RARAAAAGFEKGIDRDLEPVLSMTP) form a helical membrane-spanning segment.

It belongs to the PsbB/PsbC family. PsbC subfamily. As to quaternary structure, PSII is composed of 1 copy each of membrane proteins PsbA, PsbB, PsbC, PsbD, PsbE, PsbF, PsbH, PsbI, PsbJ, PsbK, PsbL, PsbM, PsbT, PsbX, PsbY, PsbZ, Psb30/Ycf12, at least 3 peripheral proteins of the oxygen-evolving complex and a large number of cofactors. It forms dimeric complexes. Binds multiple chlorophylls and provides some of the ligands for the Ca-4Mn-5O cluster of the oxygen-evolving complex. It may also provide a ligand for a Cl- that is required for oxygen evolution. PSII binds additional chlorophylls, carotenoids and specific lipids. is required as a cofactor.

The protein localises to the plastid. It is found in the chloroplast thylakoid membrane. Functionally, one of the components of the core complex of photosystem II (PSII). It binds chlorophyll and helps catalyze the primary light-induced photochemical processes of PSII. PSII is a light-driven water:plastoquinone oxidoreductase, using light energy to abstract electrons from H(2)O, generating O(2) and a proton gradient subsequently used for ATP formation. The chain is Photosystem II CP43 reaction center protein from Acorus calamus var. americanus (American sweet flag).